A 760-amino-acid polypeptide reads, in one-letter code: Amyloid beta precursor protein binding family B member 2 (760 aa).

2 positions are modified to phosphoserine: Ser123 and Ser160. Disordered regions lie at residues 177–295 and 324–351; these read QNLG…LPPG and PADL…KQPW. Composition is skewed to polar residues over residues 212 to 230 and 261 to 275; these read NKPQ…SSSP and SWTT…PSSP. A WW domain is found at 290–322; sequence PDLPPGWKRVNDIAGTYYWHIPTGTTQWERPVS. Phosphoserine is present on residues Ser334, Ser409, and Ser412. 2 consecutive PID domains span residues 413 to 580 and 586 to 738; these read DPEA…LQVD and TELV…VTTN.

Interacts (via C-terminus) with APP (via C-terminus). Interacts with APLP2 (via cytoplasmic domain). As to expression, expressed in the brain, retinal lens and muscle cells (at protein level).

The protein resides in the endoplasmic reticulum. Its subcellular location is the golgi apparatus. The protein localises to the early endosome. In terms of biological role, plays a role in the maintenance of lens transparency, and may also play a role in muscle cell strength. Involved in hippocampal neurite branching and neuromuscular junction formation, as a result plays a role in spatial memory functioning. Activates transcription of APP. The polypeptide is Amyloid beta precursor protein binding family B member 2 (Mus musculus (Mouse)).